The following is a 370-amino-acid chain: MAAPSEAPERRRPFGRRFLTDPTRLFQHNAWDNVEWSEEQEATAKSKVQENSSQLLPQDKQEEYEVNAKRYWDDFYKIHENGFFKDRHWLFTEFPELAPNRNPSQNEDSLCEFSCKEVSKNEGLGSCENGHCTLENRAENQLNLLKSSPRFCTEELAPQKLKQSYEDYPGSSASYRILEVGCGAGNTVFPILQTNNDPGLFVYCCDFSTTAVDLVQSNVEYDSSRCFAFVHDLCNDQSPFPMPDESLDIVILIFVLSAILPEKMQCVINKLSRLLKPGGMILLRDYGRYDLAQLRFKKGQCLSANFYVRGDGTRVYFFTQDELDDLFTRAGLQKIQNLVDRRLQVNRGKQMTMYRVWIQCKYQKPAGPQL.

Residues Trp72, Tyr76, Gly181, Asp206, Asp232, Leu233, and Ile253 each contribute to the S-adenosyl-L-methionine site.

Belongs to the methyltransferase superfamily. METL family. In terms of assembly, monomer.

The protein localises to the cytoplasm. The enzyme catalyses cytidine(32) in tRNA(Thr) + S-adenosyl-L-methionine = N(3)-methylcytidine(32) in tRNA(Thr) + S-adenosyl-L-homocysteine + H(+). It carries out the reaction cytidine(32) in tRNA(Arg)(CCU) + S-adenosyl-L-methionine = N(3)-methylcytidine(32) in tRNA(Arg)(CCU) + S-adenosyl-L-homocysteine + H(+). S-adenosyl-L-methionine-dependent methyltransferase that mediates N(3)-methylcytidine modification of residue 32 of the tRNA anticodon loop of tRNA(Thr)(UGU) and tRNA(Arg)(CCU). N(3)-methylcytidine methylation by METTL2 requires the N6-threonylcarbamoylation of tRNA (t6A37) by the EKC/KEOPS complex as prerequisite. This chain is tRNA N(3)-cytidine methyltransferase METTL2 (METTL2), found in Gallus gallus (Chicken).